Here is a 635-residue protein sequence, read N- to C-terminus: Paraneoplastic antigen-like protein 8B (635 aa).

3 disordered regions span residues 115 to 202 (PTQA…DESL), 260 to 332 (TDKS…NPEF), and 492 to 635 (AARE…PKCR). Polar residues predominate over residues 133-147 (SETQAQDSGEVTGQA). Residues 156 to 183 (NPRRGRRGRRNRTRRNRLTQKGKKRSRG) are compositionally biased toward basic residues. Residues 261–273 (DKSKKEEAEKEPA) show a composition bias toward basic and acidic residues. 2 stretches are compositionally biased toward acidic residues: residues 302–329 (PDEE…ELDN) and 502–524 (GSEE…EASE). The segment covering 531-540 (RKPRAKRART) has biased composition (basic residues). Positions 541–557 (APRGLTPAGAPPTASGA) are enriched in low complexity. Basic residues-rich tracts occupy residues 558–568 (RKTRAGGRGRG) and 619–635 (ARGK…PKCR).

Belongs to the PNMA family.

The protein is Paraneoplastic antigen-like protein 8B of Homo sapiens (Human).